A 206-amino-acid polypeptide reads, in one-letter code: Flavin prenyltransferase UbiX (206 aa).

FMN-binding positions include 11–13 (GAS), S37, 103–106 (SMST), and R138. Positions 168 and 184 each coordinate dimethylallyl phosphate.

Belongs to the UbiX/PAD1 family.

It carries out the reaction dimethylallyl phosphate + FMNH2 = prenylated FMNH2 + phosphate. Its function is as follows. Flavin prenyltransferase that catalyzes the synthesis of the prenylated FMN cofactor (prenyl-FMN) for 4-hydroxy-3-polyprenylbenzoic acid decarboxylase UbiD. The prenyltransferase is metal-independent and links a dimethylallyl moiety from dimethylallyl monophosphate (DMAP) to the flavin N5 and C6 atoms of FMN. In Synechocystis sp. (strain ATCC 27184 / PCC 6803 / Kazusa), this protein is Flavin prenyltransferase UbiX.